We begin with the raw amino-acid sequence, 251 residues long: Segregation and condensation protein A (251 aa).

It belongs to the ScpA family. As to quaternary structure, component of a cohesin-like complex composed of ScpA, ScpB and the Smc homodimer, in which ScpA and ScpB bind to the head domain of Smc. The presence of the three proteins is required for the association of the complex with DNA.

The protein resides in the cytoplasm. Its function is as follows. Participates in chromosomal partition during cell division. May act via the formation of a condensin-like complex containing Smc and ScpB that pull DNA away from mid-cell into both cell halves. This is Segregation and condensation protein A from Bacillus velezensis (strain DSM 23117 / BGSC 10A6 / LMG 26770 / FZB42) (Bacillus amyloliquefaciens subsp. plantarum).